The following is a 227-amino-acid chain: tRNA (guanine-N(1)-)-methyltransferase (227 aa).

Residues Gly-112 and 132–137 (IGDFIL) contribute to the S-adenosyl-L-methionine site.

This sequence belongs to the RNA methyltransferase TrmD family. In terms of assembly, homodimer.

The protein resides in the cytoplasm. It carries out the reaction guanosine(37) in tRNA + S-adenosyl-L-methionine = N(1)-methylguanosine(37) in tRNA + S-adenosyl-L-homocysteine + H(+). In terms of biological role, specifically methylates guanosine-37 in various tRNAs. The protein is tRNA (guanine-N(1)-)-methyltransferase of Sulfurovum sp. (strain NBC37-1).